We begin with the raw amino-acid sequence, 250 residues long: Cell division protein ZapD (250 aa).

The protein belongs to the ZapD family. Interacts with FtsZ.

It is found in the cytoplasm. Cell division factor that enhances FtsZ-ring assembly. Directly interacts with FtsZ and promotes bundling of FtsZ protofilaments, with a reduction in FtsZ GTPase activity. The polypeptide is Cell division protein ZapD (Pectobacterium atrosepticum (strain SCRI 1043 / ATCC BAA-672) (Erwinia carotovora subsp. atroseptica)).